A 273-amino-acid polypeptide reads, in one-letter code: Tyrosinase (273 aa).

Residues histidine 38, histidine 54, histidine 63, histidine 190, histidine 194, and histidine 216 each contribute to the Cu cation site.

The protein belongs to the tyrosinase family. Cu(2+) serves as cofactor.

It catalyses the reaction 2 L-dopa + O2 = 2 L-dopaquinone + 2 H2O. The enzyme catalyses L-tyrosine + O2 = L-dopaquinone + H2O. In terms of biological role, this is a copper-containing oxidase that functions in the formation of pigments such as melanins and other polyphenolic compounds. This chain is Tyrosinase (melC2), found in Streptomyces antibioticus.